The primary structure comprises 172 residues: MSSKRAKAKTTKKRPQRATSNVFAMFDQSQIQEFKEAFNMIDQNRDGFIDKEDLHDMLASLGKNPTDEYLEGMMNEAPGPINFTMFLTMFGEKLNGTDPEDVIRNAFACFDEEASGFIHEDHLRELLTTMGDRFTDEEVDEMYREAPIDKKGNFNYVEFTRILKHGAKDKDD.

The span at methionine 1–glutamine 16 shows a compositional bias: basic residues. A disordered region spans residues methionine 1–serine 20. Position 2 is an N-acetylserine (serine 2). A Phosphothreonine; by MLCK, CIT and ROCK2 modification is found at threonine 19. Serine 20 is subject to Phosphoserine; by CDC42BP, CIT, MLCK, PAK1, ROCK1, ROCK2, DAPK1, DAPK2 and ZIPK/DAPK3. 3 consecutive EF-hand domains span residues serine 29–asparagine 64, aspartate 98–arginine 133, and phenylalanine 134–aspartate 169. Residues aspartate 42, asparagine 44, aspartate 46, and aspartate 53 each coordinate Ca(2+).

Myosin is a hexamer of 2 heavy chains and 4 light chains: interacts with myosin heavy chain MYO19. Interacts with LUZP1; the interaction results in inhibition of phosphorylation of MYL9 by DAPK3. Post-translationally, phosphorylation increases the actin-activated myosin ATPase activity and thereby regulates the contractile activity. It is required to generate the driving force in the migration of the cells but not necessary for localization of myosin-2 at the leading edge. Phosphorylation is required for myotube formation. Phosphorylated by DAPK3; DAPK3-mediated phosphorylation is inhibited by LUZP1.

It localises to the cytoplasm. The protein resides in the cytoskeleton. Its subcellular location is the cell cortex. Functionally, myosin regulatory subunit that plays an important role in regulation of both smooth muscle and nonmuscle cell contractile activity via its phosphorylation. Implicated in cytokinesis, receptor capping, and cell locomotion. In myoblasts, regulates PIEZO1-dependent cortical actomyosin assembly involved in myotube formation. The protein is Myosin regulatory light polypeptide 9 (Myl9) of Mus musculus (Mouse).